The chain runs to 360 residues: Peptide chain release factor 1 (360 aa).

N5-methylglutamine is present on glutamine 235. Positions 291–308 are enriched in basic and acidic residues; the sequence is ASERRNLLGTGDRSDRNR. Residues 291–312 are disordered; that stretch reads ASERRNLLGTGDRSDRNRTYNF.

The protein belongs to the prokaryotic/mitochondrial release factor family. In terms of processing, methylated by PrmC. Methylation increases the termination efficiency of RF1.

It is found in the cytoplasm. In terms of biological role, peptide chain release factor 1 directs the termination of translation in response to the peptide chain termination codons UAG and UAA. This is Peptide chain release factor 1 from Yersinia pseudotuberculosis serotype O:1b (strain IP 31758).